Here is a 197-residue protein sequence, read N- to C-terminus: Recombination protein RecR (197 aa).

The C4-type zinc-finger motif lies at 56–71; that stretch reads CVRCFSLTDAETCNFC. The Toprim domain maps to 79-174; sequence RVLCVVETFA…RVTRIAQGLP (96 aa).

This sequence belongs to the RecR family.

In terms of biological role, may play a role in DNA repair. It seems to be involved in an RecBC-independent recombinational process of DNA repair. It may act with RecF and RecO. The polypeptide is Recombination protein RecR (Myxococcus xanthus (strain DK1622)).